The sequence spans 178 residues: Ribulose bisphosphate carboxylase small subunit, chloroplastic 2 (178 aa).

The N-terminal 54 residues, 1–54 (MASISSTVATVSRAAPAQANMVAPFTGLKSNVAFPATKKANDFSTLPSNGGRVQ), are a transit peptide targeting the chloroplast.

This sequence belongs to the RuBisCO small chain family. Heterohexadecamer of 8 large and 8 small subunits.

It is found in the plastid. The protein localises to the chloroplast. Its function is as follows. RuBisCO catalyzes two reactions: the carboxylation of D-ribulose 1,5-bisphosphate, the primary event in carbon dioxide fixation, as well as the oxidative fragmentation of the pentose substrate. Both reactions occur simultaneously and in competition at the same active site. Although the small subunit is not catalytic it is essential for maximal activity. This chain is Ribulose bisphosphate carboxylase small subunit, chloroplastic 2, found in Flaveria pringlei.